Here is a 456-residue protein sequence, read N- to C-terminus: MLNSAMSVVILAAGKGTRMYSDIPKVLHTLAGKPMVQHVIDAATKLGAAQVHLVYGHGGELLKQTLKDDKLNWVLQAEQLGTGHAMQQAAPFFSDDEDILMLYGDVPLISVETLQRLRDAKPQGGIGLLTVKLDDPSGYGRITRENGKVTGIVEHKDATDEQRQIQEINTGILIANGADLKRWLSKMTNNNAQGEYYITDIIALAYQEGREIAAVHPARISETDGVNNRLQLSRLERIYQAEQAEKLLLSGVMLRDPARFDLRGTLHCGMDVEIDANVIIEGYVTLGHRVKIGAGCIIKNSVIGDDCEISPYSVVEDAHLEAACTIGPFARLRPGAELLAGAHVGNFVEMKKARLGKGSKAGHLTYLGDAEIGDNVNIGAGTITCNYDGANKFKTVIGDDVFVGSDTQLVAPVTVGKGATIAAGTTVTRNVADNELVLSRVPQVHKQGWQRPVKKK.

A pyrophosphorylase region spans residues 1 to 229; it reads MLNSAMSVVI…ISETDGVNNR (229 aa). Residues 11 to 14, Lys-25, Gln-76, 81 to 82, 103 to 105, Gly-140, Glu-154, Asn-169, and Asn-227 contribute to the UDP-N-acetyl-alpha-D-glucosamine site; these read LAAG, GT, and YGD. Asp-105 contributes to the Mg(2+) binding site. A Mg(2+)-binding site is contributed by Asn-227. Residues 230–250 form a linker region; that stretch reads LQLSRLERIYQAEQAEKLLLS. The N-acetyltransferase stretch occupies residues 251 to 456; it reads GVMLRDPARF…QGWQRPVKKK (206 aa). UDP-N-acetyl-alpha-D-glucosamine is bound by residues Arg-333 and Lys-351. The active-site Proton acceptor is His-363. Tyr-366 and Asn-377 together coordinate UDP-N-acetyl-alpha-D-glucosamine. Acetyl-CoA is bound by residues Ala-380, 386–387, Ser-405, Ala-423, and Arg-440; that span reads NY.

In the N-terminal section; belongs to the N-acetylglucosamine-1-phosphate uridyltransferase family. This sequence in the C-terminal section; belongs to the transferase hexapeptide repeat family. In terms of assembly, homotrimer. Mg(2+) is required as a cofactor.

The protein resides in the cytoplasm. The catalysed reaction is alpha-D-glucosamine 1-phosphate + acetyl-CoA = N-acetyl-alpha-D-glucosamine 1-phosphate + CoA + H(+). It carries out the reaction N-acetyl-alpha-D-glucosamine 1-phosphate + UTP + H(+) = UDP-N-acetyl-alpha-D-glucosamine + diphosphate. It participates in nucleotide-sugar biosynthesis; UDP-N-acetyl-alpha-D-glucosamine biosynthesis; N-acetyl-alpha-D-glucosamine 1-phosphate from alpha-D-glucosamine 6-phosphate (route II): step 2/2. It functions in the pathway nucleotide-sugar biosynthesis; UDP-N-acetyl-alpha-D-glucosamine biosynthesis; UDP-N-acetyl-alpha-D-glucosamine from N-acetyl-alpha-D-glucosamine 1-phosphate: step 1/1. The protein operates within bacterial outer membrane biogenesis; LPS lipid A biosynthesis. Catalyzes the last two sequential reactions in the de novo biosynthetic pathway for UDP-N-acetylglucosamine (UDP-GlcNAc). The C-terminal domain catalyzes the transfer of acetyl group from acetyl coenzyme A to glucosamine-1-phosphate (GlcN-1-P) to produce N-acetylglucosamine-1-phosphate (GlcNAc-1-P), which is converted into UDP-GlcNAc by the transfer of uridine 5-monophosphate (from uridine 5-triphosphate), a reaction catalyzed by the N-terminal domain. The chain is Bifunctional protein GlmU from Salmonella choleraesuis (strain SC-B67).